A 566-amino-acid polypeptide reads, in one-letter code: Arginine--tRNA ligase (566 aa).

The 'HIGH' region signature appears at 121–131 (ANPNGPFHIGH).

Belongs to the class-I aminoacyl-tRNA synthetase family.

The protein resides in the cytoplasm. The enzyme catalyses tRNA(Arg) + L-arginine + ATP = L-arginyl-tRNA(Arg) + AMP + diphosphate. This chain is Arginine--tRNA ligase, found in Methanococcus maripaludis (strain C5 / ATCC BAA-1333).